Here is a 418-residue protein sequence, read N- to C-terminus: Torsin-4A-B (418 aa).

Residues 128-144 form a helical membrane-spanning segment; sequence CLLLFVGIVCFQIFNAI. 200-207 contributes to the ATP binding site; that stretch reads GPSGVGKS.

It belongs to the ClpA/ClpB family. Torsin subfamily.

The protein resides in the membrane. This Xenopus laevis (African clawed frog) protein is Torsin-4A-B (tor4a-b).